Reading from the N-terminus, the 151-residue chain is Cell division protein SepF (151 aa).

Positions 17–29 (DNEDDYQDQEDEQ) are enriched in acidic residues. The disordered stretch occupies residues 17–42 (DNEDDYQDQEDEQAQQPAPEQPVDNH).

Belongs to the SepF family. Homodimer. Interacts with FtsZ.

It is found in the cytoplasm. Cell division protein that is part of the divisome complex and is recruited early to the Z-ring. Probably stimulates Z-ring formation, perhaps through the cross-linking of FtsZ protofilaments. Its function overlaps with FtsA. In Lacticaseibacillus casei (strain BL23) (Lactobacillus casei), this protein is Cell division protein SepF.